Consider the following 7031-residue polypeptide: Extracellular matrix-binding protein EbhB (7031 aa).

The signal sequence occupies residues 1–39 (MNYRDKIQKFSIRKYTVGTFSTVIATLVFLGFNTSQAHA). A compositionally biased stretch (polar residues) spans 41 to 59 (ETNQPASVVKQKQQSNNEQ). Disordered stretches follow at residues 41–86 (ETNQ…HENE), 99–152 (KVAQ…GNDN), 250–277 (PQRQ…PRSV), 1342–1373 (NNIT…ATTD), and 2418–2438 (TITP…TLTA). The segment covering 65–80 (SQVQNSQNSQNGQSLS) has biased composition (low complexity). Over residues 99 to 117 (KVAQSSTTNDEQPASQNVN) the composition is skewed to polar residues. The segment covering 130–140 (PDKEQSKHKQN) has biased composition (basic and acidic residues). Composition is skewed to polar residues over residues 141–151 (ESQSANKNGND), 250–266 (PQRQ…QTRS), 1360–1373 (FRTT…ATTD), and 2427–2438 (HSVSSNPSTLTA). 38 FIVAR domains span residues 2524 to 2580 (AKNH…VSDA), 2610 to 2666 (SKNN…ISDE), 2687 to 2750 (DTHA…VQSA), 2780 to 2836 (AKTK…IAAE), 2864 to 2919 (AKTQ…IRQN), 2947 to 3002 (AKNQ…INTN), 3030 to 3085 (AKTQ…INDK), 3154 to 3212 (AMTK…VNQK), 3280 to 3339 (AMTG…VNNA), 3407 to 3465 (AMGN…VNRA), 3533 to 3591 (AMGN…VTEA), 3659 to 3717 (AMNT…ITQK), 3785 to 3843 (AMAS…VEAA), 3911 to 3969 (AMGN…VEQA), 4037 to 4095 (AMGT…VTAA), 4163 to 4221 (AMKG…ITQA), 4289 to 4347 (QMGN…VEAA), 4415 to 4473 (AMAN…VENA), 4541 to 4599 (AMGT…INQI), 4667 to 4725 (AMGQ…VDRA), 4793 to 4851 (AMNS…VDNA), 4919 to 4977 (AMGA…INGM), 5045 to 5103 (AMTA…VNSA), 5171 to 5229 (AMKG…ITQV), 5297 to 5355 (AMHS…VEQA), 5423 to 5481 (AMGQ…VERA), 5549 to 5607 (AMTA…VTNA), 5675 to 5733 (AMKG…INQA), 5801 to 5859 (AMTN…VETA), 5927 to 5985 (AMSN…VEQA), 6053 to 6111 (AMNQ…INQK), 6179 to 6236 (AMGN…VQAA), 6304 to 6362 (AMGQ…VEAA), 6430 to 6488 (AMQR…VEQA), 6556 to 6614 (AMDQ…VTAA), 6682 to 6740 (AMNQ…VTQA), 6818 to 6866 (DKDQ…VEAA), and 6934 to 6992 (AMGN…VEAA).

This is Extracellular matrix-binding protein EbhB (ebhB) from Staphylococcus aureus (strain Newman).